The sequence spans 1141 residues: Isoleucine--tRNA ligase, cytoplasmic (1141 aa).

A 'HIGH' region motif is present at residues 50-60 (PFATGLPHYGH). Residues 601-605 (KMSKS) carry the 'KMSKS' region motif. Lysine 604 contributes to the ATP binding site.

Belongs to the class-I aminoacyl-tRNA synthetase family.

It is found in the cytoplasm. It carries out the reaction tRNA(Ile) + L-isoleucine + ATP = L-isoleucyl-tRNA(Ile) + AMP + diphosphate. The protein is Isoleucine--tRNA ligase, cytoplasmic of Caenorhabditis elegans.